The sequence spans 225 residues: Large ribosomal subunit protein mL58 (225 aa).

The interval 106–138 (PQAPITTPESSSTDAAAADQHGDLPPVLYNPTK) is disordered. Over residues 109 to 119 (PITTPESSSTD) the composition is skewed to polar residues.

Belongs to the mitochondrion-specific ribosomal protein mL58 family. In terms of assembly, component of the mitochondrial large ribosomal subunit (mt-LSU). Mature N.crassa 74S mitochondrial ribosomes consist of a small (37S) and a large (54S) subunit. The 37S small subunit contains a 16S ribosomal RNA (16S mt-rRNA) and 32 different proteins. The 54S large subunit contains a 23S rRNA (23S mt-rRNA) and 42 different proteins.

It localises to the mitochondrion. Component of the mitochondrial ribosome (mitoribosome), a dedicated translation machinery responsible for the synthesis of mitochondrial genome-encoded proteins, including at least some of the essential transmembrane subunits of the mitochondrial respiratory chain. The mitoribosomes are attached to the mitochondrial inner membrane and translation products are cotranslationally integrated into the membrane. The polypeptide is Large ribosomal subunit protein mL58 (mrpl20) (Neurospora crassa (strain ATCC 24698 / 74-OR23-1A / CBS 708.71 / DSM 1257 / FGSC 987)).